Here is a 585-residue protein sequence, read N- to C-terminus: Probable phosphoglucomutase, cytoplasmic 2 (585 aa).

The segment at 1–20 (MVSFKVSLVSTSPIDGQKPG) is disordered. Alpha-D-glucose 1,6-bisphosphate contacts are provided by Arg-25 and Ser-124. Ser-124 serves as the catalytic Phosphoserine intermediate. Mg(2+) is bound by residues Ser-124, Asp-301, Asp-303, and Asp-305. Position 124 is a phosphoserine (Ser-124). Positions 305, 306, 369, 388, 390, and 401 each coordinate alpha-D-glucose 1,6-bisphosphate.

It belongs to the phosphohexose mutase family. Monomer. It depends on Mg(2+) as a cofactor.

The protein resides in the cytoplasm. The enzyme catalyses alpha-D-glucose 1-phosphate = alpha-D-glucose 6-phosphate. The catalysed reaction is O-phospho-L-seryl-[protein] + alpha-D-glucose 1-phosphate = alpha-D-glucose 1,6-bisphosphate + L-seryl-[protein]. It catalyses the reaction alpha-D-glucose 1,6-bisphosphate + L-seryl-[protein] = O-phospho-L-seryl-[protein] + alpha-D-glucose 6-phosphate. Its function is as follows. Catalyzes the reversible isomerization of alpha-D-glucose 1-phosphate to alpha-D-glucose 6-phosphate. The mechanism proceeds via the intermediate compound alpha-D-glucose 1,6-bisphosphate. This enzyme participates in both the breakdown and synthesis of glucose. This is Probable phosphoglucomutase, cytoplasmic 2 from Arabidopsis thaliana (Mouse-ear cress).